The sequence spans 145 residues: Ribosomal RNA large subunit methyltransferase H (145 aa).

Residues Leu-62, Gly-94, and 113–118 (LGQLTL) each bind S-adenosyl-L-methionine.

The protein belongs to the RNA methyltransferase RlmH family. Homodimer.

Its subcellular location is the cytoplasm. The catalysed reaction is pseudouridine(1915) in 23S rRNA + S-adenosyl-L-methionine = N(3)-methylpseudouridine(1915) in 23S rRNA + S-adenosyl-L-homocysteine + H(+). Its function is as follows. Specifically methylates the pseudouridine at position 1915 (m3Psi1915) in 23S rRNA. This Deinococcus deserti (strain DSM 17065 / CIP 109153 / LMG 22923 / VCD115) protein is Ribosomal RNA large subunit methyltransferase H.